Here is a 544-residue protein sequence, read N- to C-terminus: Chaperonin GroEL (544 aa).

Residues 30 to 33, lysine 51, 87 to 91, glycine 415, and aspartate 495 contribute to the ATP site; these read TLGP and DGTTT.

The protein belongs to the chaperonin (HSP60) family. In terms of assembly, forms a cylinder of 14 subunits composed of two heptameric rings stacked back-to-back. Interacts with the co-chaperonin GroES.

It is found in the cytoplasm. It carries out the reaction ATP + H2O + a folded polypeptide = ADP + phosphate + an unfolded polypeptide.. Its function is as follows. Together with its co-chaperonin GroES, plays an essential role in assisting protein folding. The GroEL-GroES system forms a nano-cage that allows encapsulation of the non-native substrate proteins and provides a physical environment optimized to promote and accelerate protein folding. This is Chaperonin GroEL from Aeromonas salmonicida.